The sequence spans 201 residues: Large ribosomal subunit protein uL4 (201 aa).

The segment at 43-73 is disordered; it reads TRAQKTRSEVSGGGAKPWRQKGTGRARAGTT.

This sequence belongs to the universal ribosomal protein uL4 family. Part of the 50S ribosomal subunit.

Its function is as follows. One of the primary rRNA binding proteins, this protein initially binds near the 5'-end of the 23S rRNA. It is important during the early stages of 50S assembly. It makes multiple contacts with different domains of the 23S rRNA in the assembled 50S subunit and ribosome. Functionally, forms part of the polypeptide exit tunnel. In Colwellia psychrerythraea (strain 34H / ATCC BAA-681) (Vibrio psychroerythus), this protein is Large ribosomal subunit protein uL4.